Here is a 479-residue protein sequence, read N- to C-terminus: Glycogen synthase (479 aa).

Lysine 15 lines the ADP-alpha-D-glucose pocket.

This sequence belongs to the glycosyltransferase 1 family. Bacterial/plant glycogen synthase subfamily.

It catalyses the reaction [(1-&gt;4)-alpha-D-glucosyl](n) + ADP-alpha-D-glucose = [(1-&gt;4)-alpha-D-glucosyl](n+1) + ADP + H(+). Its pathway is glycan biosynthesis; glycogen biosynthesis. Synthesizes alpha-1,4-glucan chains using ADP-glucose. The chain is Glycogen synthase from Pectobacterium carotovorum subsp. carotovorum (strain PC1).